Consider the following 187-residue polypeptide: Protein TfaD (187 aa).

It in the C-terminal section; belongs to the tfa family.

The polypeptide is Protein TfaD (tfaD) (Escherichia coli (strain K12)).